A 233-amino-acid polypeptide reads, in one-letter code: Large ribosomal subunit protein eL6y (233 aa).

Residues 48-72 (HDAKSKVDAPVEKPPKFYPAEDVKK) are compositionally biased toward basic and acidic residues. Residues 48-82 (HDAKSKVDAPVEKPPKFYPAEDVKKPLPNRRTAKP) form a disordered region.

Belongs to the eukaryotic ribosomal protein eL6 family.

This Arabidopsis thaliana (Mouse-ear cress) protein is Large ribosomal subunit protein eL6y (RPL6B).